The sequence spans 590 residues: MMPGLKLYGALILCVLVLPFSRPSSQVLDCREVRSSFQFLYPGMKWTPETPVSGSDLQVCQPKGLTCCSRKMEERYLLIAKQNMESSLQATSAQLKGLIIQNAALFQEAFDMVLRLGRNSTLMVLREEFPGLGAGASGAVTQLFLDMSLYILGSDANVNDMVSTFFSRLFPLTYRRLLGNGAVAGISEECLRGAWKGSSAYGSFPKMMMTRLSRSLLATRVFLQALNLGIEVVNTTQHLRAGRDCGRSLLKLWYCPHCQSLLEARPCRPLCVSTMGACLGGTTEVQPHWRAYVDELGSLAAAMKGEQDIEAVVLRLHVIIRQALKQAVASKSKVSAQVSGMCVHAPPRVSRAVPVSAEHTSASTVNHNRPPMNFDPDETLFGRRREFISGLRGFSQFYSGLGEALCSKEPTSLNSSLCWNGQEMTDKFPGPGLKRVHPHGSESKQKTPEPVISQIIDKLKHINQLLRMVTLPEKRWRARQGGGGARRNPSGPGQTDEDEEGLESGDCDDEDECTGVSGLGPPPRRKRLRIFADLADNLAIDDLTLHELLLTPRLATDAHGGSSIPGAAHVPTAAFIFTITIIIFITLGLQ.

Residues 1-25 (MMPGLKLYGALILCVLVLPFSRPSS) form the signal peptide. 7 disulfides stabilise this stretch: cysteine 30–cysteine 67, cysteine 60–cysteine 255, cysteine 68–cysteine 258, cysteine 190–cysteine 342, cysteine 245–cysteine 278, cysteine 267–cysteine 418, and cysteine 271–cysteine 406. 2 N-linked (GlcNAc...) asparagine glycosylation sites follow: asparagine 119 and asparagine 234. N-linked (GlcNAc...) asparagine glycosylation occurs at asparagine 414. 2 disordered regions span residues 429–450 (PGPG…TPEP) and 476–520 (WRAR…SGLG). Positions 495 to 513 (TDEDEEGLESGDCDDEDEC) are enriched in acidic residues. Residues serine 504 and serine 517 are each glycosylated (O-linked (Xyl...) (glycosaminoglycan) serine).

It belongs to the glypican family. In terms of assembly, heterodimer; disulfide-linked. Cleavage by a furin-like convertase results in production of alpha and beta chains which form a disulfide-linked heterodimer. Post-translationally, O-glycosylated; contains heparan sulfate and/or chondroitin sulfate. Cleaved intracellularly by a furin-like convertase to generate 2 subunits, alpha and beta, which remain associated through disulfide bonds and are associated with the cell surface via the GPI-anchor. This processing is essential for its role in inhibition of hedgehog signaling. A second proteolytic event may result in cleavage of the protein on the cell surface, separating it from the GPI-anchor and leading to its shedding from the cell surface. As to expression, maternally expressed and is almost ubiquitous during blastula and gastrula stages but becomes restricted to the prospective hindbrain by 24 hours post-fertilization.

It localises to the cell membrane. In terms of biological role, cell surface proteoglycan. Negatively regulates the hedgehog signaling pathway. Positively regulates the canonical and non-canonical Wnt signaling pathways. Binds to CD81 which decreases the availability of free CD81 for binding to the transcriptional repressor HHEX, resulting in nuclear translocation of HHEX and transcriptional repression. Inhibits the dipeptidyl peptidase activity of DPP4. Plays a role in limb patterning and skeletal development. Modulates the effects of growth factors on renal branching morphogenesis. Required for coronary vascular development. Plays a role in regulating cell movements during gastrulation. The chain is Glypican-3 from Danio rerio (Zebrafish).